The following is a 182-amino-acid chain: Putative adenylate kinase (182 aa).

ATP is bound by residues Gly-10, Gly-12, Lys-13, Thr-14, and Ser-15. The tract at residues 30–53 is NMP; that stretch reads HLNEMIKEEHLYTEVDEVRDAVIA. The interval 104–114 is LID; that stretch reads ARGYSEEKIRE. Residues Arg-105 and Lys-143 each coordinate ATP.

The protein belongs to the adenylate kinase family. AK6 subfamily. In terms of assembly, interacts with uS11. Not a structural component of 40S pre-ribosomes, but transiently interacts with them by binding to uS11.

The enzyme catalyses AMP + ATP = 2 ADP. It carries out the reaction ATP + H2O = ADP + phosphate + H(+). Broad-specificity nucleoside monophosphate (NMP) kinase that catalyzes the reversible transfer of the terminal phosphate group between nucleoside triphosphates and monophosphates. Also has ATPase activity. Involved in the late maturation steps of the 30S ribosomal particles, specifically 16S rRNA maturation. While NMP activity is not required for ribosome maturation, ATPase activity is. Associates transiently with small ribosomal subunit protein uS11. ATP hydrolysis breaks the interaction with uS11. May temporarily remove uS11 from the ribosome to enable a conformational change of the ribosomal RNA that is needed for the final maturation step of the small ribosomal subunit. This is Putative adenylate kinase from Methanosarcina barkeri (strain Fusaro / DSM 804).